The chain runs to 317 residues: MYTKILGTGSYLPVQVRTNADLEKMVDTSDEWIVSRTGIRERRIAAADETVATMGFHAAEKALEMAGVAKEDIGLIVVATTTSTHAFPSSACQVQQMLGIKDCAAFDLAAACAGFTYALSVADQYVKNGAVKHALVIGADVLSRTLDPEDRGTIILFGDGAGAVLLGASEEPGILSTHLHADGSYGGLLTLPFKDRQDQDKPAYVTMAGNEVFKVAVTELAHIVDETLQANNLDRSALDWLVPHQANLRIISATAKKLGMGMDKVVVTLDRHGNTSAASVPAALDEAVRDGRIQRGQLVLLEAFGGGFTWGSALVRF.

Residues cysteine 112 and histidine 244 contribute to the active site. Residues 245-249 (QANLR) are ACP-binding. Residue asparagine 274 is part of the active site.

The protein belongs to the thiolase-like superfamily. FabH family. Homodimer.

The protein localises to the cytoplasm. The enzyme catalyses malonyl-[ACP] + acetyl-CoA + H(+) = 3-oxobutanoyl-[ACP] + CO2 + CoA. Its pathway is lipid metabolism; fatty acid biosynthesis. Its function is as follows. Catalyzes the condensation reaction of fatty acid synthesis by the addition to an acyl acceptor of two carbons from malonyl-ACP. Catalyzes the first condensation reaction which initiates fatty acid synthesis and may therefore play a role in governing the total rate of fatty acid production. Possesses both acetoacetyl-ACP synthase and acetyl transacylase activities. Its substrate specificity determines the biosynthesis of branched-chain and/or straight-chain of fatty acids. The protein is Beta-ketoacyl-[acyl-carrier-protein] synthase III of Serratia proteamaculans (strain 568).